The primary structure comprises 246 residues: 3'(2'),5'-bisphosphate nucleotidase CysQ (246 aa).

Mg(2+)-binding residues include glutamate 64, aspartate 83, leucine 85, aspartate 86, and aspartate 205. Glutamate 64 serves as a coordination point for substrate. Substrate is bound by residues leucine 85–threonine 88 and aspartate 205.

It belongs to the inositol monophosphatase superfamily. CysQ family. The cofactor is Mg(2+).

It localises to the cell inner membrane. It catalyses the reaction adenosine 3',5'-bisphosphate + H2O = AMP + phosphate. Functionally, converts adenosine-3',5'-bisphosphate (PAP) to AMP. The chain is 3'(2'),5'-bisphosphate nucleotidase CysQ from Shigella flexneri.